The following is a 126-amino-acid chain: Large ribosomal subunit protein bL19 (126 aa).

This sequence belongs to the bacterial ribosomal protein bL19 family.

This protein is located at the 30S-50S ribosomal subunit interface and may play a role in the structure and function of the aminoacyl-tRNA binding site. This is Large ribosomal subunit protein bL19 from Bordetella petrii (strain ATCC BAA-461 / DSM 12804 / CCUG 43448).